The primary structure comprises 320 residues: Dual oxidase maturation factor 2 (320 aa).

Residues 1–21 (MTLWNGVLPFYPQPRHAAGFS) are Extracellular-facing. A helical membrane pass occupies residues 22–42 (VPLLIVILVFLALAASFLLIL). The Cytoplasmic portion of the chain corresponds to 43 to 56 (PGIRGHSRWFWLVR). A helical transmembrane segment spans residues 57-77 (VLLSLFIGAEIVAVHFSAEWF). Residues 78-183 (VGTVNTNTSY…HLAGHYASAT (106 aa)) lie on the Extracellular side of the membrane. 3 N-linked (GlcNAc...) asparagine glycosylation sites follow: Asn84, Asn109, and Asn121. Residues 184 to 204 (LWVAFCFWLLSNVLLSTPAPL) form a helical membrane-spanning segment. The Cytoplasmic portion of the chain corresponds to 205-206 (YG). A helical membrane pass occupies residues 207 to 227 (GLALLTTGAFALFGVFALASI). Residues 228-247 (SSVPLCPLRLGSSALTTQYG) are Extracellular-facing. The helical transmembrane segment at 248–268 (AAFWVTLATGVLCLFLGGAVV) threads the bilayer. Topologically, residues 269–320 (SLQYVRPSALRTLLDQSAKDCSQERGGSPLILGDPLHKQAALPDLKCITTNL) are cytoplasmic.

Belongs to the DUOXA family. As to quaternary structure, heterodimer with DUXA2; disulfide-linked. Interacts with CSNK1G2. Post-translationally, N-glycosylated. Specifically expressed in thyroid. Also detected in salivary glands.

The protein resides in the endoplasmic reticulum membrane. Its function is as follows. Required for the maturation and the transport from the endoplasmic reticulum to the plasma membrane of functional DUOX2. May play a role in thyroid hormone synthesis. The protein is Dual oxidase maturation factor 2 (DUOXA2) of Homo sapiens (Human).